A 350-amino-acid polypeptide reads, in one-letter code: UDP-3-O-acylglucosamine N-acyltransferase (350 aa).

H244 (proton acceptor) is an active-site residue.

The protein belongs to the transferase hexapeptide repeat family. LpxD subfamily. As to quaternary structure, homotrimer.

It carries out the reaction a UDP-3-O-[(3R)-3-hydroxyacyl]-alpha-D-glucosamine + a (3R)-hydroxyacyl-[ACP] = a UDP-2-N,3-O-bis[(3R)-3-hydroxyacyl]-alpha-D-glucosamine + holo-[ACP] + H(+). Its pathway is bacterial outer membrane biogenesis; LPS lipid A biosynthesis. In terms of biological role, catalyzes the N-acylation of UDP-3-O-acylglucosamine using 3-hydroxyacyl-ACP as the acyl donor. Is involved in the biosynthesis of lipid A, a phosphorylated glycolipid that anchors the lipopolysaccharide to the outer membrane of the cell. This chain is UDP-3-O-acylglucosamine N-acyltransferase, found in Herminiimonas arsenicoxydans.